A 485-amino-acid chain; its full sequence is Glutamyl-tRNA(Gln) amidotransferase subunit A 1 (485 aa).

Catalysis depends on charge relay system residues lysine 79 and serine 154. The active-site Acyl-ester intermediate is serine 178.

It belongs to the amidase family. GatA subfamily. As to quaternary structure, heterotrimer of A, B and C subunits.

It catalyses the reaction L-glutamyl-tRNA(Gln) + L-glutamine + ATP + H2O = L-glutaminyl-tRNA(Gln) + L-glutamate + ADP + phosphate + H(+). Its function is as follows. Allows the formation of correctly charged Gln-tRNA(Gln) through the transamidation of misacylated Glu-tRNA(Gln) in organisms which lack glutaminyl-tRNA synthetase. The reaction takes place in the presence of glutamine and ATP through an activated gamma-phospho-Glu-tRNA(Gln). The polypeptide is Glutamyl-tRNA(Gln) amidotransferase subunit A 1 (gatA1) (Clostridium acetobutylicum (strain ATCC 824 / DSM 792 / JCM 1419 / IAM 19013 / LMG 5710 / NBRC 13948 / NRRL B-527 / VKM B-1787 / 2291 / W)).